A 359-amino-acid polypeptide reads, in one-letter code: Type-1 angiotensin II receptor (359 aa).

Topologically, residues 1 to 25 (MVPNYSTEETVKRIHVDCPVSGRHS) are extracellular. A glycan (N-linked (GlcNAc...) asparagine) is linked at Asn4. Asp17 is a binding site for angiotensin II. Intrachain disulfides connect Cys18–Cys274 and Cys101–Cys180. The chain crosses the membrane as a helical span at residues 26 to 55 (YIYIMVPTVYSIIFIIGIFGNSLVVIVIYC). Over 56–61 (YMKLKT) the chain is Cytoplasmic. A helical transmembrane segment spans residues 62–89 (VASIFLLNLALADLCFLITLPLWAAYTA). At 90–98 (MEYQWPFGN) the chain is on the extracellular side. The helical transmembrane segment at 99 to 125 (CLCKLASAGISFNLYASVFLLTCLSID) threads the bilayer. The Cytoplasmic portion of the chain corresponds to 126 to 141 (RYLAIVHPVKSRIRRT). A helical membrane pass occupies residues 142–165 (MFVARVTCIVIWLLAGVASLPVII). The Extracellular portion of the chain corresponds to 166–190 (HRNIFFAENLNMTVCGFRYDNNNTT). Residue Arg167 participates in angiotensin II binding. Asn176 is a glycosylation site (N-linked (GlcNAc...) asparagine). Angiotensin II-binding residues include Phe182 and Tyr184. N-linked (GlcNAc...) asparagine glycans are attached at residues Asn187 and Asn188. Residues 191 to 216 (LRVGLGLSKNLLGFLIPFLIILTSYT) traverse the membrane as a helical segment. Lys199 is a binding site for angiotensin II. The Cytoplasmic segment spans residues 217-239 (LIWKTLKKAYQIQRNKTRNDDIF). A helical membrane pass occupies residues 240–268 (KMIVAIVFFFFFSWIPHQVFTFLDVLIQL). The Extracellular segment spans residues 269–278 (HVITDCKITD). Residues 279-304 (IVDTAMPFTICIAYFNNCLNPFFYVF) traverse the membrane as a helical segment. Residues 305-359 (FGKNFKKYFLQLIKYIPPNVSTHPSLTTKMSSLSYRPPENIRLPTKKTAGSFDAE) lie on the Cytoplasmic side of the membrane.

This sequence belongs to the G-protein coupled receptor 1 family. In terms of processing, C-terminal Ser or Thr residues may be phosphorylated.

Its subcellular location is the cell membrane. Functionally, receptor for angiotensin II, a vasoconstricting peptide, which acts as a key regulator of blood pressure and sodium retention by the kidney. The activated receptor in turn couples to G-alpha proteins G(q) (GNAQ, GNA11, GNA14 or GNA15) and thus activates phospholipase C and increases the cytosolic Ca(2+) concentrations, which in turn triggers cellular responses such as stimulation of protein kinase C. This chain is Type-1 angiotensin II receptor (AGTR1), found in Gallus gallus (Chicken).